Consider the following 409-residue polypeptide: Elongation factor Tu, plastid (409 aa).

In terms of domain architecture, tr-type G spans 10–214 (KPHINIGTIG…SVDSYIPTPV (205 aa)). The tract at residues 19 to 26 (GHVDHGKT) is G1. 19 to 26 (GHVDHGKT) is a GTP binding site. Thr26 lines the Mg(2+) pocket. The G2 stretch occupies residues 60–64 (GITIN). Residues 81–84 (DCPG) form a G3 region. Residues 81–85 (DCPGH) and 136–139 (NKED) contribute to the GTP site. Residues 136–139 (NKED) are G4. The segment at 174–176 (SAL) is G5.

It belongs to the TRAFAC class translation factor GTPase superfamily. Classic translation factor GTPase family. EF-Tu/EF-1A subfamily.

It is found in the plastid. It carries out the reaction GTP + H2O = GDP + phosphate + H(+). In terms of biological role, GTP hydrolase that promotes the GTP-dependent binding of aminoacyl-tRNA to the A-site of ribosomes during protein biosynthesis. This chain is Elongation factor Tu, plastid (tufA), found in Helicosporidium sp. subsp. Simulium jonesii (Green alga).